A 272-amino-acid polypeptide reads, in one-letter code: MNNRVHQGHFARKRFGQNFLNDQFVIDSIVSAIHPVPGEAVVEIGPGLGALTEPVAARMDHMTVIELDRDLAARLASHPQLKDKLTIHQQDAMKVNFSELSEQAGQPLRVFGNLPYNISTPLMFHLFSYTDAIRDMHFMLQKEVVNRLVAGPNSKTYGRLTVMAQYYCNVIPVLEVPPTAFTPAPKVDSAVVRLIPHVQMPHPVGDVRMLSRITTQAFNQRRKTVRNSLGDLFTSEQLIELGIDPILRAENISVAQYCKLANWLSAQSTPQK.

6 residues coordinate S-adenosyl-L-methionine: Asn-18, Leu-20, Gly-45, Glu-66, Asp-91, and Asn-113.

The protein belongs to the class I-like SAM-binding methyltransferase superfamily. rRNA adenine N(6)-methyltransferase family. RsmA subfamily.

Its subcellular location is the cytoplasm. It carries out the reaction adenosine(1518)/adenosine(1519) in 16S rRNA + 4 S-adenosyl-L-methionine = N(6)-dimethyladenosine(1518)/N(6)-dimethyladenosine(1519) in 16S rRNA + 4 S-adenosyl-L-homocysteine + 4 H(+). Specifically dimethylates two adjacent adenosines (A1518 and A1519) in the loop of a conserved hairpin near the 3'-end of 16S rRNA in the 30S particle. May play a critical role in biogenesis of 30S subunits. In Yersinia pestis bv. Antiqua (strain Antiqua), this protein is Ribosomal RNA small subunit methyltransferase A.